Here is a 380-residue protein sequence, read N- to C-terminus: MSSSVGATLEAIKYTRGSLEILDQLLIPKSFIYEVVDTTEKAFHAIRDMKVRGAPAIAIVAVLTLAVEANQLLQSNDALLADASAIAKLFNEKLDRLAESRPTAVNLFQAVGDFKNKIAQSLETNKTGTEIVQLIIDEAEALMNRDIEENAKISECGSDHIISTNPSSTTLKVLTHCNTGALATMKYGTALGVIRFLQKKNVLEHAFCTETRPYNQGARLTAFELVYEKIPSTLICDSAVSYLFKTKKIDAIIVGADRVCNNGDTANKIGTYHIAVSAKHHGIPFYVAAPFTSIDLTLASGDLITIEERSEKEITHYRNNDERAVVENIGVWNPGFDVTTADLISGFFTDIGVFTPLTCATTGKKYYDLKTQQAEKLKQQ.

Residue Asp257 is the Proton donor of the active site.

The protein belongs to the eIF-2B alpha/beta/delta subunits family. MtnA subfamily.

The protein resides in the cytoplasm. Its subcellular location is the nucleus. The enzyme catalyses 5-(methylsulfanyl)-alpha-D-ribose 1-phosphate = 5-(methylsulfanyl)-D-ribulose 1-phosphate. It participates in amino-acid biosynthesis; L-methionine biosynthesis via salvage pathway; L-methionine from S-methyl-5-thio-alpha-D-ribose 1-phosphate: step 1/6. Functionally, catalyzes the interconversion of methylthioribose-1-phosphate (MTR-1-P) into methylthioribulose-1-phosphate (MTRu-1-P). This Naegleria gruberi (Amoeba) protein is Methylthioribose-1-phosphate isomerase.